We begin with the raw amino-acid sequence, 621 residues long: tRNA uridine 5-carboxymethylaminomethyl modification enzyme MnmG (621 aa).

9 to 14 (GGGHAG) serves as a coordination point for FAD. An NAD(+)-binding site is contributed by 270–284 (GPRYCPSIEDKIVKF).

It belongs to the MnmG family. Homodimer. Heterotetramer of two MnmE and two MnmG subunits. Requires FAD as cofactor.

The protein localises to the cytoplasm. NAD-binding protein involved in the addition of a carboxymethylaminomethyl (cmnm) group at the wobble position (U34) of certain tRNAs, forming tRNA-cmnm(5)s(2)U34. The chain is tRNA uridine 5-carboxymethylaminomethyl modification enzyme MnmG from Borreliella afzelii (strain PKo) (Borrelia afzelii).